Consider the following 108-residue polypeptide: Glutaredoxin-1 (108 aa).

One can recognise a Glutaredoxin domain in the interval 3–106; the sequence is EEFVQQRLTN…DILSSIGVLR (104 aa). Cys23 and Cys26 form a disulfide bridge.

The protein belongs to the glutaredoxin family.

Its subcellular location is the virion. Displays thioltransferase and dehydroascorbate reductase activities. In Variola virus (isolate Human/India/Ind3/1967) (VARV), this protein is Glutaredoxin-1 (OPG075).